Consider the following 258-residue polypeptide: Tryptophan synthase alpha chain (258 aa).

Catalysis depends on proton acceptor residues Glu50 and Asp61.

The protein belongs to the TrpA family. As to quaternary structure, tetramer of two alpha and two beta chains.

The catalysed reaction is (1S,2R)-1-C-(indol-3-yl)glycerol 3-phosphate + L-serine = D-glyceraldehyde 3-phosphate + L-tryptophan + H2O. It functions in the pathway amino-acid biosynthesis; L-tryptophan biosynthesis; L-tryptophan from chorismate: step 5/5. In terms of biological role, the alpha subunit is responsible for the aldol cleavage of indoleglycerol phosphate to indole and glyceraldehyde 3-phosphate. This chain is Tryptophan synthase alpha chain, found in Clostridium beijerinckii (strain ATCC 51743 / NCIMB 8052) (Clostridium acetobutylicum).